The primary structure comprises 43 residues: MEISTFLSIFISAALLGITGYSIYTAFGPPSKNLRDPFEEHED.

The helical transmembrane segment at 5–27 (TFLSIFISAALLGITGYSIYTAF) threads the bilayer.

This sequence belongs to the PsbN family.

The protein resides in the plastid. It is found in the cyanelle thylakoid membrane. May play a role in photosystem I and II biogenesis. This is Protein PsbN from Cyanophora paradoxa.